Here is a 107-residue protein sequence, read N- to C-terminus: MAYLFLFCAIFVEVVATTLLKSTEGFTRLVPTLACLAGYAVTFTLLALSISRGMKTDVAYALWSAIGTAAIVLIAVLFLDSPVSVAKVVGVALIIVGVITLNLADAH.

Helical transmembrane passes span 2–19, 29–51, 58–77, and 82–104; these read AYLFLFCAIFVEVVATTL, LVPTLACLAGYAVTFTLLALSIS, VAYALWSAIGTAAIVLIAVL, and PVSVAKVVGVALIIVGVITLNLA.

This sequence belongs to the drug/metabolite transporter (DMT) superfamily. Small multidrug resistance (SMR) (TC 2.A.7.1) family. Mmr subfamily.

Its subcellular location is the cell membrane. Multidrug efflux pump. Confers resistance to tetraphenylphosphonium (TPP), erythromycin, ethidium bromide, acriflavine, safranin O and pyronin Y. The chain is Multidrug resistance protein mmr (mmr) from Mycobacterium leprae (strain TN).